The following is a 129-amino-acid chain: Succinate dehydrogenase assembly factor 3, mitochondrial (129 aa).

Residues 1-21 constitute a mitochondrion transit peptide; it reads MQVNHLLRQAVKQTTRAGRLG.

This sequence belongs to the complex I LYR family. SDHAF3 subfamily. As to quaternary structure, interacts with the iron-sulfur protein subunit within the SDH catalytic dimer.

Its subcellular location is the mitochondrion matrix. Functionally, plays an essential role in the assembly of succinate dehydrogenase (SDH), an enzyme complex (also referred to as respiratory complex II) that is a component of both the tricarboxylic acid (TCA) cycle and the mitochondrial electron transport chain, and which couples the oxidation of succinate to fumarate with the reduction of ubiquinone (coenzyme Q) to ubiquinol. Promotes maturation of the iron-sulfur protein subunit of the SDH catalytic dimer, protecting it from the deleterious effects of oxidants. May act together with SDHAF1. This chain is Succinate dehydrogenase assembly factor 3, mitochondrial, found in Kluyveromyces lactis (strain ATCC 8585 / CBS 2359 / DSM 70799 / NBRC 1267 / NRRL Y-1140 / WM37) (Yeast).